The primary structure comprises 275 residues: Large ribosomal subunit protein uL2c (275 aa).

The segment at 225–249 (PVDHPHGGGEGRAPIGRKKPTTPWG) is disordered.

The protein belongs to the universal ribosomal protein uL2 family. In terms of assembly, part of the 50S ribosomal subunit.

The protein localises to the plastid. The sequence is that of Large ribosomal subunit protein uL2c (rpl2) from Cuscuta reflexa (Southern Asian dodder).